A 177-amino-acid chain; its full sequence is Adenine phosphoribosyltransferase (177 aa).

The protein belongs to the purine/pyrimidine phosphoribosyltransferase family. Homodimer.

Its subcellular location is the cytoplasm. It catalyses the reaction AMP + diphosphate = 5-phospho-alpha-D-ribose 1-diphosphate + adenine. It functions in the pathway purine metabolism; AMP biosynthesis via salvage pathway; AMP from adenine: step 1/1. Its function is as follows. Catalyzes a salvage reaction resulting in the formation of AMP, that is energically less costly than de novo synthesis. This Chlorobium chlorochromatii (strain CaD3) protein is Adenine phosphoribosyltransferase.